The chain runs to 434 residues: Vi polysaccharide export inner-membrane protein VexD (434 aa).

Residues 1-50 (MENSERIKKWKEERAKVAQESRASRLQQKEDERALRQTEKSADAKSHHNP) are compositionally biased toward basic and acidic residues. Residues 1-58 (MENSERIKKWKEERAKVAQESRASRLQQKEDERALRQTEKSADAKSHHNPDAGWSATD) are disordered. 2 helical membrane-spanning segments follow: residues 84-104 (LFLY…ILTS) and 409-429 (WLLF…LITI).

The protein belongs to the BexC/CtrB/KpsE family.

The protein localises to the cell inner membrane. Its function is as follows. May form an ATP-driven capsule polysaccharide export apparatus, in association with the VexA, VexB and VexC proteins. This Salmonella typhi protein is Vi polysaccharide export inner-membrane protein VexD (vexD).